The following is a 285-amino-acid chain: Energy-coupling factor transporter ATP-binding protein EcfA3 (285 aa).

In terms of domain architecture, ABC transporter spans 6 to 242 (LKVEELNYNY…KEVIRKVNLR (237 aa)). Position 39-46 (39-46 (GGNGVGKS)) interacts with ATP.

The protein belongs to the ABC transporter superfamily. Energy-coupling factor EcfA family. As to quaternary structure, forms a stable energy-coupling factor (ECF) transporter complex composed of 2 membrane-embedded substrate-binding proteins (S component), 2 ATP-binding proteins (A component) and 2 transmembrane proteins (T component).

It localises to the cell membrane. ATP-binding (A) component of a common energy-coupling factor (ECF) ABC-transporter complex. Unlike classic ABC transporters this ECF transporter provides the energy necessary to transport a number of different substrates. The polypeptide is Energy-coupling factor transporter ATP-binding protein EcfA3 (Clostridium perfringens (strain ATCC 13124 / DSM 756 / JCM 1290 / NCIMB 6125 / NCTC 8237 / Type A)).